A 61-amino-acid chain; its full sequence is Metallothionein-2 (61 aa).

Residue methionine 1 is modified to N-acetylmethionine. The tract at residues 1–29 is beta; the sequence is MDPNCSCATDGSCSCAGSCKCKQCKCTSC. A divalent metal cation contacts are provided by cysteine 5, cysteine 7, cysteine 13, cysteine 15, cysteine 19, cysteine 21, cysteine 24, cysteine 26, cysteine 29, cysteine 33, cysteine 34, cysteine 36, cysteine 37, cysteine 41, cysteine 44, cysteine 48, cysteine 50, and cysteine 57. The alpha stretch occupies residues 30–61; the sequence is KKSCCSCCPVGCAKCSQGCICKEASDKCSCCA. At serine 58 the chain carries Phosphoserine. Residues cysteine 59 and cysteine 60 each coordinate a divalent metal cation.

Belongs to the metallothionein superfamily. Type 1 family.

In terms of biological role, metallothioneins have a high content of cysteine residues that bind various heavy metals; these proteins are transcriptionally regulated by both heavy metals and glucocorticoids. The sequence is that of Metallothionein-2 (Mt2) from Rattus norvegicus (Rat).